The primary structure comprises 339 residues: D-erythrose-4-phosphate dehydrogenase (339 aa).

An NAD(+)-binding site is contributed by 11–12 (RI). Substrate is bound by residues 158 to 160 (SCT), Arg204, 217 to 218 (TK), and Arg240. Catalysis depends on Cys159, which acts as the Nucleophile. Position 322 (Asn322) interacts with NAD(+).

This sequence belongs to the glyceraldehyde-3-phosphate dehydrogenase family. Epd subfamily. As to quaternary structure, homotetramer.

It is found in the cytoplasm. It carries out the reaction D-erythrose 4-phosphate + NAD(+) + H2O = 4-phospho-D-erythronate + NADH + 2 H(+). Its pathway is cofactor biosynthesis; pyridoxine 5'-phosphate biosynthesis; pyridoxine 5'-phosphate from D-erythrose 4-phosphate: step 1/5. Catalyzes the NAD-dependent conversion of D-erythrose 4-phosphate to 4-phosphoerythronate. This Aliivibrio fischeri (strain ATCC 700601 / ES114) (Vibrio fischeri) protein is D-erythrose-4-phosphate dehydrogenase.